We begin with the raw amino-acid sequence, 119 residues long: MPRVKRSVTARARHKKVLKLAKGYRGRRKNIYRIAKQAVMKAGQYAYRDRRQRKRQFRALWIARINAAVRELGMTYSTFMNGLKKSGIGLDRKVLADLAVFDKAAFEKITNQVKTSLAN.

Belongs to the bacterial ribosomal protein bL20 family.

Its function is as follows. Binds directly to 23S ribosomal RNA and is necessary for the in vitro assembly process of the 50S ribosomal subunit. It is not involved in the protein synthesizing functions of that subunit. This chain is Large ribosomal subunit protein bL20, found in Nitrosomonas eutropha (strain DSM 101675 / C91 / Nm57).